Here is a 629-residue protein sequence, read N- to C-terminus: tRNA uridine 5-carboxymethylaminomethyl modification enzyme MnmG (629 aa).

Residues 14–19, Val126, and Ser181 contribute to the FAD site; that span reads GAGHAG. 273–287 contacts NAD(+); the sequence is GPRYCPSIEDKVVRF. Gln370 serves as a coordination point for FAD.

The protein belongs to the MnmG family. Homodimer. Heterotetramer of two MnmE and two MnmG subunits. Requires FAD as cofactor.

It localises to the cytoplasm. In terms of biological role, NAD-binding protein involved in the addition of a carboxymethylaminomethyl (cmnm) group at the wobble position (U34) of certain tRNAs, forming tRNA-cmnm(5)s(2)U34. This is tRNA uridine 5-carboxymethylaminomethyl modification enzyme MnmG from Bacillus thuringiensis (strain Al Hakam).